The primary structure comprises 67 residues: Small ribosomal subunit protein eS31 (67 aa).

4 residues coordinate Zn(2+): C31, C34, C49, and C52. The segment at 31–52 (CPKCGAGVFMAEHLNRFACGKC) adopts a C4-type zinc-finger fold.

This sequence belongs to the eukaryotic ribosomal protein eS31 family. Part of the 30S ribosomal subunit. Requires Zn(2+) as cofactor.

This chain is Small ribosomal subunit protein eS31, found in Methanococcus maripaludis (strain C5 / ATCC BAA-1333).